A 771-amino-acid polypeptide reads, in one-letter code: Glucocorticoid receptor (771 aa).

Positions 1–415 (MDLKESVTSS…STTTGPPPKL (415 aa)) are modulating. The residue at position 8 (Thr-8) is a Phosphothreonine. Arg-22 bears the Omega-N-methylarginine mark. A phosphoserine mark is found at Ser-44, Ser-133, Ser-199, Ser-207, and Ser-222. A compositionally biased stretch (polar residues) spans 129 to 172 (SRSTSVPENPKNSASAVSGTPTEEFPKTQSDLSSEQENLKSQAG). Residues 129 to 184 (SRSTSVPENPKNSASAVSGTPTEEFPKTQSDLSSEQENLKSQAGTNGGNVKFPPDQ) are disordered. Lys-254 is covalently cross-linked (Glycyl lysine isopeptide (Lys-Gly) (interchain with G-Cter in SUMO2)). Ser-263 carries the phosphoserine modification. Residues Lys-273 and Lys-289 each participate in a glycyl lysine isopeptide (Lys-Gly) (interchain with G-Cter in SUMO); alternate cross-link. Residues Lys-273 and Lys-289 each participate in a glycyl lysine isopeptide (Lys-Gly) (interchain with G-Cter in SUMO2); alternate cross-link. Residues Ser-303 and Ser-400 each carry the phosphoserine modification. The interval 390–411 (SSPGLRPDVSSPPSSSSTTTGP) is disordered. Residues 400 to 409 (SPPSSSSTTT) show a composition bias toward low complexity. Lys-414 participates in a covalent cross-link: Glycyl lysine isopeptide (Lys-Gly) (interchain with G-Cter in ubiquitin). NR C4-type zinc fingers lie at residues 416 to 436 (CLVCSDELSGCHYGVLTCGSC) and 452 to 476 (CAGRNDCIIDKIRRENCPACRYRKC). The segment at residues 416-481 (CLVCSDELSG…RYRKCLQAGM (66 aa)) is a DNA-binding region (nuclear receptor). An N6-acetyllysine mark is found at Lys-475, Lys-487, Lys-489, and Lys-490. Residues 480-771 (GMNLQARKTK…DIKKLLFHQK (292 aa)) are interaction with CLOCK. Residues 482-517 (NLQARKTKKKIKGIQQATTGVSQNTSENPNKTIVPA) form a hinge region. The NR LBD domain occupies 518–752 (TLPQLTPTLV…FPEMLAEIIT (235 aa)). Residues 526 to 691 (LVSLLEVIEP…EIRMTYIKEL (166 aa)) form an interaction with CRY1 region. A Glycyl lysine isopeptide (Lys-Gly) (interchain with G-Cter in SUMO) cross-link involves residue Lys-697.

This sequence belongs to the nuclear hormone receptor family. NR3 subfamily. Heteromultimeric cytoplasmic complex with HSP90AA1, HSPA1A/HSPA1B, and FKBP5 or another immunophilin such as PPID, STIP1, or the immunophilin homolog PPP5C. Upon ligand binding FKBP5 dissociates from the complex and FKBP4 takes its place, thereby linking the complex to dynein and mediating transport to the nucleus, where the complex dissociates. Probably forms a complex composed of chaperones HSP90 and HSP70, co-chaperones CDC37, PPP5C, TSC1 and client protein TSC2, CDK4, AKT, RAF1 and NR3C1; this complex does not contain co-chaperones STIP1/HOP and PTGES3/p23. Directly interacts with UNC45A. Binds to DNA as a homodimer, and as heterodimer with NR3C2 or the retinoid X receptor. Binds STAT5A and STAT5B homodimers and heterodimers. Interacts with NRIP1, POU2F1, POU2F2 and TRIM28. Interacts with several coactivator complexes, including the SMARCA4 complex, CREBBP/EP300, TADA2L (Ada complex) and p160 coactivators such as NCOA2 and NCOA6. Interaction with BAG1 inhibits transactivation. Interacts with HEXIM1 and TGFB1I1. Interacts with NCOA1. Interacts with NCOA3, SMARCA4, SMARCC1, SMARCD1, and SMARCE1. Interacts with CLOCK, CRY1 and CRY2 in a ligand-dependent fashion. Interacts with CIART. Interacts with RWDD3. Interacts with UBE2I/UBC9 and this interaction is enhanced in the presence of RWDD3. Interacts with GRIP1. Interacts with NR4A3 (via nuclear receptor DNA-binding domain), represses transcription activity of NR4A3 on the POMC promoter Nur response element (NurRE). Directly interacts with PNRC2 to attract and form a complex with UPF1 and DCP1A; the interaction leads to rapid mRNA degradation. Interacts with GSK3B. Interacts with FNIP1 and FNIP2. Interacts (via C-terminus) with HNRNPU (via C-terminus). Interacts with MCM3AP. Interacts (via domain NR LBD) with HSP90AA1 and HSP90AB1. In the absence of hormonal ligand, interacts with TACC1. Interacts (via NR LBD domain) with ZNF764 (via KRAB domain); the interaction regulates transcription factor activity of NR3C1 by directing its actions toward certain biologic pathways. In terms of processing, acetylation by CLOCK reduces its binding to glucocorticoid response elements and its transcriptional activity. Increased proteasome-mediated degradation in response to glucocorticoids. Post-translationally, phosphorylated in the absence of hormone; becomes hyperphosphorylated in the presence of glucocorticoid. The Ser-199, Ser-222 and Ser-400-phosphorylated forms are mainly cytoplasmic, and the Ser-207-phosphorylated form is nuclear. Phosphorylation at Ser-207 increases transcriptional activity. Phosphorylation at Ser-199, Ser-222 and Ser-400 decreases signaling capacity. Phosphorylation at Ser-400 may protect from glucocorticoid-induced apoptosis. Phosphorylation at Ser-199 and Ser-207 is not required in regulation of chromosome segregation. May be dephosphorylated by PPP5C, attenuates NR3C1 action. In terms of processing, ubiquitinated by UBR5, leading to its degradation: UBR5 specifically recognizes and binds ligand-bound NR3C1 when it is not associated with coactivators (NCOAs). In presence of NCOAs, the UBR5-degron is not accessible, preventing its ubiquitination and degradation. Sumoylation at Lys-273 and Lys-289 negatively regulates its transcriptional activity. Sumoylation at Lys-697 positively regulates its transcriptional activity in the presence of RWDD3. Sumoylation at Lys-273 and Lys-289 is dispensable whereas sumoylation at Lys-697 is critical for the stimulatory effect of RWDD3 on its transcriptional activity. Heat shock increases sumoylation in a RWDD3-dependent manner.

Its subcellular location is the cytoplasm. It localises to the nucleus. The protein localises to the mitochondrion. The protein resides in the cytoskeleton. It is found in the spindle. Its subcellular location is the microtubule organizing center. It localises to the centrosome. The protein localises to the chromosome. The protein resides in the nucleoplasm. Functionally, receptor for glucocorticoids (GC). Has a dual mode of action: as a transcription factor that binds to glucocorticoid response elements (GRE), both for nuclear and mitochondrial DNA, and as a modulator of other transcription factors. Affects inflammatory responses, cellular proliferation and differentiation in target tissues. Involved in chromatin remodeling. Plays a role in rapid mRNA degradation by binding to the 5' UTR of target mRNAs and interacting with PNRC2 in a ligand-dependent manner which recruits the RNA helicase UPF1 and the mRNA-decapping enzyme DCP1A, leading to RNA decay. Could act as a coactivator for STAT5-dependent transcription upon growth hormone (GH) stimulation and could reveal an essential role of hepatic GR in the control of body growth. Mediates glucocorticoid-induced apoptosis. Promotes accurate chromosome segregation during mitosis. May act as a tumor suppressor. May play a negative role in adipogenesis through the regulation of lipolytic and antilipogenic gene expression. The protein is Glucocorticoid receptor (NR3C1) of Cavia porcellus (Guinea pig).